Here is a 262-residue protein sequence, read N- to C-terminus: Acidic leucine-rich nuclear phosphoprotein 32 family member B (262 aa).

LRR repeat units follow at residues 16–40 (PGEV…LSSD), 43–64 (NLEF…PKLN), 65–87 (KLRK…AERT), and 89–110 (NLTH…EPLK). The LRRCT domain maps to 123–161 (CEVTMLINYRESVFTLLPQLTYLDGFDADEQEAPDSDPE). Residues 150–233 (ADEQEAPDSD…EDEEDDEADD (84 aa)) show a composition bias toward acidic residues. A disordered region spans residues 150–262 (ADEQEAPDSD…PEDEEDDEDD (113 aa)). Residues 240–243 (KRKR) carry the Nuclear localization signal motif. Positions 247 to 262 (DEGEEDPEDEEDDEDD) are enriched in acidic residues.

The protein belongs to the ANP32 family. In terms of assembly, interacts with histones H3 and H4. Interacts with KLF5; this interaction induces promoter region-specific histone incorporation and inhibition of histone acetylation by ANP32B. Post-translationally, directly cleaved by caspase-3/CASP3.

The protein resides in the nucleus. In terms of biological role, multifunctional protein that is involved in the regulation of many processes including cell proliferation, apoptosis, cell cycle progression or transcription. Regulates the proliferation of neuronal stem cells, differentiation of leukemic cells and progression from G1 to S phase of the cell cycle. As negative regulator of caspase-3-dependent apoptosis, may act as an antagonist of ANP32A in regulating tissue homeostasis. Exhibits histone chaperone properties, able to recruit histones to certain promoters, thus regulating the transcription of specific genes. Also plays an essential role in the nucleocytoplasmic transport of specific mRNAs via the uncommon nuclear mRNA export receptor XPO1/CRM1. This is Acidic leucine-rich nuclear phosphoprotein 32 family member B (ANP32B) from Gallus gallus (Chicken).